Reading from the N-terminus, the 168-residue chain is UPF0262 protein BRADO6636 (168 aa).

This sequence belongs to the UPF0262 family.

The chain is UPF0262 protein BRADO6636 from Bradyrhizobium sp. (strain ORS 278).